Consider the following 415-residue polypeptide: Translation initiation factor 2 subunit gamma (415 aa).

One can recognise a tr-type G domain in the interval Gln-7–Tyr-206. The G1 stretch occupies residues Gly-16–Thr-23. Residues Asp-19, Thr-23, Gly-44, and Thr-46 each contribute to the Mg(2+) site. Residue Asp-19–Thr-24 participates in GTP binding. The tract at residues Gly-44–Lys-48 is G2. Positions 59, 62, 74, and 77 each coordinate Zn(2+). Residues Asp-93–Gly-96 form a G3 region. Residues Asn-149 to Asp-152 and Ser-184 to Leu-186 contribute to the GTP site. Residues Asn-149–Asp-152 form a G4 region. The G5 stretch occupies residues Ser-184–Leu-186.

It belongs to the TRAFAC class translation factor GTPase superfamily. Classic translation factor GTPase family. EIF2G subfamily. As to quaternary structure, heterotrimer composed of an alpha, a beta and a gamma chain. Requires Mg(2+) as cofactor.

It carries out the reaction GTP + H2O = GDP + phosphate + H(+). EIF-2 functions in the early steps of protein synthesis by forming a ternary complex with GTP and initiator tRNA. The protein is Translation initiation factor 2 subunit gamma of Saccharolobus solfataricus (strain ATCC 35092 / DSM 1617 / JCM 11322 / P2) (Sulfolobus solfataricus).